The sequence spans 392 residues: Basic salivary proline-rich protein 1 (392 aa).

The N-terminal stretch at 1–16 is a signal peptide; the sequence is MLLILLSVALLALSSA. Position 17 is a pyrrolidone carboxylic acid (Gln17). Residues 19 to 28 are compositionally biased toward polar residues; sequence LNEDVSQEES. Positions 19–392 are disordered; sequence LNEDVSQEES…QGGRPSRPPQ (374 aa). Residues 34-47 show a composition bias toward low complexity; it reads GNPQGPSPQGGNKP. The residue at position 40 (Ser40) is a Phosphoserine; alternate. A glycan (O-linked (Hex) serine; alternate) is linked at Ser40. Over residues 48-83 the composition is skewed to pro residues; the sequence is QGPPPPPGKPQGPPPQGGNKPQGPPPPGKPQGPPPQ. Repeat copies occupy residues 53–72, 73–92, 93–112, 114–133, 134–153, 154–173, 175–194, 195–214, 215–234, 236–255, 256–275, 276–295, 297–316, 317–336, and 338–357. The tract at residues 53-357 is 15 X 20 AA approximate tandem repeats of P-P-G-K-P-Q-G-P-P-[PAQ]-Q-[GE]-[GD]-[NKS]-[KSQRN]-[PRQS]-[QS] [GPS]-[PQAR]-[PSR]; the sequence is PPGKPQGPPP…QEGNNPQGPP (305 aa). A glycan (O-linked (HexNAc...) serine) is linked at Ser87. The span at 91-144 shows a compositional bias: pro residues; sequence RSPPGKPQGPPPQGGNQPQGPPPPPGKPQGPPPQGGNKPQGPPPPGKPQGPPPQ. Ser92 is modified (phosphoserine). Ser150 is subject to Phosphoserine; alternate. Ser150 carries O-linked (Hex) serine; alternate glycosylation. Pro residues-rich tracts occupy residues 152-205, 213-243, 252-266, and 274-324; these read RSPP…PPPQ, RSPPGKPQGPPPQGGNQPQGPPPPPGKPQGP, QGPPPPGKPQGPPPQ, and QSPP…PQGP. Residues 325–334 are compositionally biased toward low complexity; sequence PAQGGSKSQS. A glycan (O-linked (HexNAc...) serine) is linked at Ser330. The segment covering 354–392 has biased composition (pro residues); it reads QGPPPPAGGNPQQPQAPPAGQPQGPPRPPQGGRPSRPPQ.

Post-translationally, O-glycosylated. O-glycosylation on Ser-87 is prevalent in head and neck cancer patients. O-Glycosylation on Ser-330 has a 5 times prevalence in head and neck cancers. Proteolytically cleaved at the tripeptide Xaa-Pro-Gln, where Xaa in the P(3) position is mostly lysine. The endoprotease may be of microbial origin. In terms of processing, pyroglutamate formation occurs on terminal Gln residues of cleaved peptides. Besides on the N-terminal of mature PBR1, pyroglutamate formation found on at least Gln-58.

The protein resides in the secreted. The chain is Basic salivary proline-rich protein 1 (PRB1) from Homo sapiens (Human).